The primary structure comprises 330 residues: MRKIAIDAMGGENAPEEIVEAVLKAKPELPEDKFIFFGDEGKMKELLPADDDQIEIVATTEVILDEDEPVKAMRTKKDSSMVVAANWVKEGKADALLSLGNTGALLTCGIFIVGRIKGVARPGLMPTMPVESSDDGFNIIDVGANATSKPEYLLQWAEMASYYAEKVRGVSKPRVALLNNGAEFDKGDDLHKEVYQLLQDSSLNFTGNIEGHELLQGKADVVVTDGFTGNAVLKSIEGTGSVIIHMLKDGLLNNGVKAKLGALLAKDALKSVASRFDKDKYGGAVLLGLNSPVVKQHGRSDARAVYYAVKQIDKILTEDLTNTFKQEFSK.

This sequence belongs to the PlsX family. As to quaternary structure, homodimer. Probably interacts with PlsY.

It is found in the cytoplasm. The catalysed reaction is a fatty acyl-[ACP] + phosphate = an acyl phosphate + holo-[ACP]. Its pathway is lipid metabolism; phospholipid metabolism. In terms of biological role, catalyzes the reversible formation of acyl-phosphate (acyl-PO(4)) from acyl-[acyl-carrier-protein] (acyl-ACP). This enzyme utilizes acyl-ACP as fatty acyl donor, but not acyl-CoA. The sequence is that of Phosphate acyltransferase from Lactobacillus delbrueckii subsp. bulgaricus (strain ATCC 11842 / DSM 20081 / BCRC 10696 / JCM 1002 / NBRC 13953 / NCIMB 11778 / NCTC 12712 / WDCM 00102 / Lb 14).